The chain runs to 570 residues: Hydroxylamine reductase (570 aa).

Cys-5, Cys-8, Cys-17, and Cys-23 together coordinate [4Fe-4S] cluster. 8 residues coordinate hybrid [4Fe-2O-2S] cluster: His-266, Glu-290, Cys-334, Cys-425, Cys-453, Cys-478, Glu-513, and Lys-515. Cys-425 is modified (cysteine persulfide).

The protein belongs to the HCP family. It depends on [4Fe-4S] cluster as a cofactor. The cofactor is hybrid [4Fe-2O-2S] cluster.

Its subcellular location is the cytoplasm. The catalysed reaction is A + NH4(+) + H2O = hydroxylamine + AH2 + H(+). In terms of biological role, catalyzes the reduction of hydroxylamine to form NH(3) and H(2)O. This is Hydroxylamine reductase from Clostridium botulinum (strain ATCC 19397 / Type A).